Here is a 129-residue protein sequence, read N- to C-terminus: Transcriptional activator protein (129 aa).

Positions 13–28 (KAQHRAAKRRAIRRRR) match the Nuclear localization signal motif. A zinc finger lies at 33–50 (CGCSIYIHIDCRNNGFTH). The segment at 73–118 (LFQDNQRRGSPLHQHQDIPLTNQVQPQPEESIGSPQGISQLPSMDD) is disordered. Residues 91–114 (PLTNQVQPQPEESIGSPQGISQLP) show a composition bias toward polar residues. Residues 115-129 (SMDDIDDSFWENLFK) are transactivation.

The protein belongs to the geminiviridae transcriptional activator protein family. In terms of assembly, monomer. Homodimer. Homooligomer. Self-interaction correlates with nuclear localization and efficient activation of transcription. Monomers suppress local silencing by interacting with and inactivating host adenosine kinase (ADK) in the cytoplasm. Interacts with and inhibits host SNF1 kinase. Binds to ssDNA. Post-translationally, phosphorylated.

The protein resides in the host nucleus. Its subcellular location is the host cytoplasm. Strong activator of the late viral genes promoters. Enhances the expression of the capsid protein and nuclear shuttle protein. Acts as a suppressor of RNA-mediated gene silencing, also known as post-transcriptional gene silencing (PTGS), a mechanism of plant viral defense that limits the accumulation of viral RNAs. Suppresses the host RNA silencing by inhibiting adenosine kinase (ADK), a kinase involved in a general methylation pathway. Also suppresses the host basal defense by interacting with and inhibiting SNF1 kinase, a key regulator of cell metabolism implicated in innate antiviral defense. Determines pathogenicity. The protein is Transcriptional activator protein of Tomato golden mosaic virus (strain Yellow vein) (TGMV).